The primary structure comprises 32 residues: Delta-conotoxin-like MVID (32 aa).

3 cysteine pairs are disulfide-bonded: Cys-3/Cys-18, Cys-10/Cys-22, and Cys-17/Cys-27. Position 14 is a 4-hydroxyproline (Pro-14).

Belongs to the conotoxin O1 superfamily. Expressed by the venom duct.

The protein resides in the secreted. Delta-conotoxins bind to site 6 of voltage-gated sodium channels (Nav) and inhibit the inactivation process. The protein is Delta-conotoxin-like MVID of Conus magus (Magical cone).